The primary structure comprises 498 residues: Cytochrome P450 monooxygenase astB (498 aa).

A helical membrane pass occupies residues 7–27; the sequence is FTTMPVVLLVGLVLYQLLAFT. N-linked (GlcNAc...) asparagine glycosylation is found at Asn237, Asn248, and Asn346. Residue Cys425 coordinates heme.

The protein belongs to the cytochrome P450 family. Heme serves as cofactor.

The protein localises to the membrane. The enzyme catalyses preasperterpenoid A + 4 reduced [NADPH--hemoprotein reductase] + 4 O2 = asperterpenoid A + 4 oxidized [NADPH--hemoprotein reductase] + 5 H2O + 5 H(+). It catalyses the reaction asperterpenoid A + 2 reduced [NADPH--hemoprotein reductase] + 2 O2 = asperterpenoid B + 2 oxidized [NADPH--hemoprotein reductase] + 3 H2O + 3 H(+). Its pathway is secondary metabolite biosynthesis; terpenoid biosynthesis. Cytochrome P450 monooxygenase; part of the gene cluster that mediates the biosynthesis of the asperterpenoids, sesterterpenes that exhibit anti-tuberculosis activity. The first step of the pathway is performed by the sesterterpene synthase astC that possesses both prenyl transferase and terpene cyclase activity, converting isopentenyl diphosphate and dimethylallyl diphosphate into geranylfarnesyl diphosphate (GFPP) and further converting GFPP into preasperterpenoid A, respectively. The cytochrome P450 monooxygenase astB then dually oxidizes preasperterpenoid A to produce asperterpenoid A along with a minor product, asperterpenoid B. Finally, the cytochrome P450 monooxygenase astA converts asperterpenoid A into asperterpenoid C. The polypeptide is Cytochrome P450 monooxygenase astB (Talaromyces wortmannii (Penicillium wortmannii)).